The sequence spans 492 residues: Probable Xaa-Pro aminopeptidase AO090005001240 (492 aa).

Positions 272, 283, 420, and 459 each coordinate Mn(2+).

This sequence belongs to the peptidase M24B family. Requires Mn(2+) as cofactor.

The catalysed reaction is Release of any N-terminal amino acid, including proline, that is linked to proline, even from a dipeptide or tripeptide.. Catalyzes the removal of a penultimate prolyl residue from the N-termini of peptides. This is Probable Xaa-Pro aminopeptidase AO090005001240 from Aspergillus oryzae (strain ATCC 42149 / RIB 40) (Yellow koji mold).